A 2544-amino-acid polypeptide reads, in one-letter code: Highly reducing polyketide synthase pkhB (2544 aa).

Residues 9-438 (SEPIAIIGMS…GTNAHVILES (430 aa)) enclose the Ketosynthase family 3 (KS3) domain. Residues C182, H317, and H358 each act as for beta-ketoacyl synthase activity in the active site. Residues 566–876 (VFTGQVFRRS…PYWGCLVRDE (311 aa)) are malonyl-CoA:ACP transacylase (MAT) domain. The tract at residues 948–1082 (HELLGMPVAG…GMVGIEESAV (135 aa)) is N-terminal hotdog fold. A dehydratase (DH) domain region spans residues 948–1252 (HELLGMPVAG…VELAALGRGS (305 aa)). A PKS/mFAS DH domain is found at 948 to 1254 (HELLGMPVAG…LAALGRGSSA (307 aa)). H980 functions as the Proton acceptor; for dehydratase activity in the catalytic mechanism. The segment at 1095–1254 (YTRQPNPQDL…LAALGRGSSA (160 aa)) is C-terminal hotdog fold. The active-site Proton donor; for dehydratase activity is the D1165. The segment at 1398–1573 (SSLRQLSALL…FSGLDLEIYD (176 aa)) is methyltransferase (CMet) domain. The segment at 1826–2142 (GHLGTLAFAE…TGDQMGKVVL (317 aa)) is enoyl reductase (ER) domain. The tract at residues 2169 to 2356 (ASYLIVGGVG…GVAIDLGPIS (188 aa)) is ketoreductase (KR) domain. Residues 2462-2539 (EGARLIGAAI…ALAGLVAEKS (78 aa)) form the Carrier domain. An O-(pantetheine 4'-phosphoryl)serine modification is found at S2499.

Pantetheine 4'-phosphate serves as cofactor.

The protein operates within secondary metabolite biosynthesis. Highly reducing polyketide synthase; part of the pkh gene cluster that mediates the biosynthesis of 2,4-dihydroxy-6-[(3E,5E,7E)-2-oxonona-3,5,7-trienyl]benzaldehyde. The highly reducing polyketide synthase pkhB first produces the (2E,4E,6E)-octa-2,4,6-trienyl strater unit for the non-reducing polyketide synthase pkhA. This octatrienoyl starter is then loaded onto the SAT domain of the NR-PKS pkhA to be condensed with 4 malonyl-CoA units to yield 2,4-dihydroxy-6-[(3E,5E,7E)-2-oxonona-3,5,7-trienyl]benzaldehyde. The sequence is that of Highly reducing polyketide synthase pkhB from Emericella nidulans (strain FGSC A4 / ATCC 38163 / CBS 112.46 / NRRL 194 / M139) (Aspergillus nidulans).